The primary structure comprises 494 residues: Alpha-amylase-related protein (494 aa).

The signal sequence occupies residues 1-20 (MIKFALALTLCLAGASLSLA). Residue Gln21 is modified to Pyrrolidone carboxylic acid. A disulfide bridge connects residues Cys48 and Cys104. Ca(2+) is bound by residues Asn118, Gln169, and Asp178. Cys157 and Cys171 are oxidised to a cystine. Arg206 serves as a coordination point for chloride. Asp208 serves as the catalytic Nucleophile. His212 contributes to the Ca(2+) binding site. Glu245 (proton donor) is an active-site residue. Chloride contacts are provided by Asn308 and Arg343. Cystine bridges form between Cys376/Cys382, Cys418/Cys441, and Cys448/Cys460.

Belongs to the glycosyl hydrolase 13 family. In terms of assembly, monomer. It depends on Ca(2+) as a cofactor. The cofactor is chloride.

Its subcellular location is the secreted. The enzyme catalyses Endohydrolysis of (1-&gt;4)-alpha-D-glucosidic linkages in polysaccharides containing three or more (1-&gt;4)-alpha-linked D-glucose units.. The chain is Alpha-amylase-related protein (Amyrel) from Drosophila auraria (Fruit fly).